We begin with the raw amino-acid sequence, 154 residues long: MKTVIFLALLGLAAAEFIEIGYKVCKSDGTVSQVKADGCELTVKDGKKVCLFKKGSRPIIQIAFKPSKDTDKLKTSVRAKVGGSAMVDFPQTNSDACTYGVKCPVSAGENQIFEQSISITENHPAGEVIQVNWQLTRPDSGKEVCIIFLAEIKE.

Residues 1 to 15 form the signal peptide; the sequence is MKTVIFLALLGLAAA. Cystine bridges form between Cys39/Cys50 and Cys97/Cys103.

Belongs to the NPC2 family.

The protein resides in the secreted. This Caenorhabditis elegans protein is Putative protein heh-1 (heh-1).